The following is a 352-amino-acid chain: tRNA-specific 2-thiouridylase MnmA (352 aa).

6–13 (AVSGGTDS) contributes to the ATP binding site. The Nucleophile role is filled by Cys92. A disulfide bond links Cys92 and Cys189. Gly116 contributes to the ATP binding site. The segment at 139 to 141 (KDQ) is interaction with tRNA. Cys189 (cysteine persulfide intermediate) is an active-site residue. An interaction with tRNA region spans residues 294–295 (RY).

The protein belongs to the MnmA/TRMU family.

The protein resides in the cytoplasm. The catalysed reaction is S-sulfanyl-L-cysteinyl-[protein] + uridine(34) in tRNA + AH2 + ATP = 2-thiouridine(34) in tRNA + L-cysteinyl-[protein] + A + AMP + diphosphate + H(+). Catalyzes the 2-thiolation of uridine at the wobble position (U34) of tRNA, leading to the formation of s(2)U34. This chain is tRNA-specific 2-thiouridylase MnmA, found in Lawsonia intracellularis (strain PHE/MN1-00).